The sequence spans 401 residues: 3-sulfinopropanoyl-CoA desulfinase (401 aa).

Residues 121–124 (ICIS), S130, and 153–156 (YWIT) contribute to the FAD site. Position 243-244 (243-244 (YN)) interacts with substrate. FAD-binding positions include R272, Q339, S343, 366–370 (GGTAQ), and Q387.

It belongs to the acyl-CoA dehydrogenase family. Homotetramer. It depends on FAD as a cofactor.

The enzyme catalyses 3-sulfinopropanoyl-CoA + H2O = propanoyl-CoA + sulfite + H(+). Its function is as follows. Catalyzes the conversion 3-sulfinopropanoyl-CoA (3SP-CoA) to propanoyl-CoA by abstraction of sulfite. Does not show dehydrogenase activity. Involved in the degradation of 3,3'-dithiodipropionate (DTDP), a sulfur-containing precursor substrate for biosynthesis of polythioesters (PTEs). This Advenella mimigardefordensis (strain DSM 17166 / LMG 22922 / DPN7) protein is 3-sulfinopropanoyl-CoA desulfinase.